The sequence spans 481 residues: Phosphoglycerate kinase 1, chloroplastic (481 aa).

The transit peptide at 1-75 (MASAAASSAF…VRGKGSRGVV (75 aa)) directs the protein to the chloroplast. Residue S81 is modified to Phosphoserine. Positions 99, 100, 102, 116, 138, 139, 141, 142, 197, 229, and 230 each coordinate (2R)-3-phosphoglycerate. G275 lines the ADP pocket. Residue G275 coordinates CDP. Positions 277 and 281 each coordinate AMP. An ATP-binding site is contributed by K281. G299 lines the ADP pocket. CDP is bound at residue G299. Residues G300 and G372 each contribute to the AMP site. Positions 300 and 372 each coordinate ATP. G397 and F402 together coordinate CDP. An ADP-binding site is contributed by F402. E403 provides a ligand contact to AMP. ATP-binding residues include E403, D434, and S435. Position 434 (D434) interacts with Mg(2+).

This sequence belongs to the phosphoglycerate kinase family. As to quaternary structure, monomer. Binds to FTSZ2-1 and FTSZ2-2. It depends on Mg(2+) as a cofactor.

It is found in the plastid. Its subcellular location is the chloroplast. It carries out the reaction (2R)-3-phosphoglycerate + ATP = (2R)-3-phospho-glyceroyl phosphate + ADP. It participates in carbohydrate biosynthesis; Calvin cycle. In terms of biological role, may trigger the phosphorylation of FTSZ2-1 and FTSZ2-2. The polypeptide is Phosphoglycerate kinase 1, chloroplastic (Arabidopsis thaliana (Mouse-ear cress)).